The primary structure comprises 92 residues: Small ribosomal subunit protein uS19 (92 aa).

It belongs to the universal ribosomal protein uS19 family.

In terms of biological role, protein S19 forms a complex with S13 that binds strongly to the 16S ribosomal RNA. In Sodalis glossinidius (strain morsitans), this protein is Small ribosomal subunit protein uS19.